The chain runs to 154 residues: Probable archaeosortase D (154 aa).

A run of 4 helical transmembrane segments spans residues 6–26 (AIYILRFLIYFFIFYYILKML), 57–77 (IIEISSPCTCSLEMALFLGYI), 91–111 (YSVFGLSIITISNILRIILII), and 125–145 (VISFIIFPIALFLNWFWIYLL). Catalysis depends on C64, which acts as the Acyl-thioester intermediate. Catalysis depends on R106, which acts as the Proton donor.

It belongs to the exosortase/archaeosortase family. Archaeosortase D subfamily.

The protein localises to the cell membrane. Its function is as follows. Transpeptidase that recognizes and modifies its substrate by proteolytic cleavage of a sorting signal. Following cleavage, a covalent intermediate is formed via a thioester bond between the archaeosortase and its substrate, which is then transferred and covalently attached to the cell membrane. The sequence is that of Probable archaeosortase D from Methanocaldococcus jannaschii (strain ATCC 43067 / DSM 2661 / JAL-1 / JCM 10045 / NBRC 100440) (Methanococcus jannaschii).